A 238-amino-acid polypeptide reads, in one-letter code: Uridylate kinase (238 aa).

Residue 12–15 (KLSG) coordinates ATP. Residue glycine 54 participates in UMP binding. Glycine 55 and arginine 59 together coordinate ATP. UMP-binding positions include aspartate 74 and 135-142 (TGNPFFTT). ATP contacts are provided by threonine 162, tyrosine 168, and aspartate 171.

The protein belongs to the UMP kinase family. Homohexamer.

The protein resides in the cytoplasm. It carries out the reaction UMP + ATP = UDP + ADP. It participates in pyrimidine metabolism; CTP biosynthesis via de novo pathway; UDP from UMP (UMPK route): step 1/1. With respect to regulation, inhibited by UTP. In terms of biological role, catalyzes the reversible phosphorylation of UMP to UDP. The chain is Uridylate kinase from Bordetella parapertussis (strain 12822 / ATCC BAA-587 / NCTC 13253).